The sequence spans 405 residues: Potassium channel subfamily K member 13 (405 aa).

Over 1 to 19 (MAGRGCGCSPGHLNEDNAR) the chain is Cytoplasmic. A helical membrane pass occupies residues 20–40 (FLLLAGLILLYLLGGAAVFSA). N-linked (GlcNAc...) asparagine glycosylation is found at Asn-59 and Asn-65. The pore-forming intramembrane region spans 95 to 115 (WDFTGAFYFVGTVVSTIGFGM). Residues Thr-110, Ile-111, and Gly-112 each contribute to the K(+) site. Residues 110-115 (TIGFGM) form a selectivity filter 1 region. A helical membrane pass occupies residues 125–145 (IFLIFYGLIGCASTILFFNLF). Over 146–193 (LERLITVIACVMRSCHQQQLRRRGAVTQDNMKAPEKGEADSLTGWKPS) the chain is Cytoplasmic. The helical transmembrane segment at 194–214 (VYYVMLILCLASVAISCGASA) threads the bilayer. Residues 224 to 244 (YFDSVYFCFVAFSTIGFGDLV) constitute an intramembrane region (pore-forming). Positions 237, 238, 239, and 240 each coordinate K(+). The tract at residues 237–242 (TIGFGD) is selectivity filter 2. Residues 263–283 (FLILMGVCCIYSLFNVISILI) form a helical membrane-spanning segment. Topologically, residues 284 to 405 (KQTVNWILRK…NRLAETSGDR (122 aa)) are cytoplasmic.

The protein belongs to the two pore domain potassium channel (TC 1.A.1.8) family. In terms of assembly, homodimer. Heterodimer with KCNK12.

The protein resides in the cell membrane. The enzyme catalyses K(+)(in) = K(+)(out). Functionally, k(+) channel that conducts outward rectifying tonic currents potentiated by purinergic signals. Homo- and heterodimerizes to form functional channels with distinct regulatory and gating properties. Contributes most of K(+) currents at the plasma membrane of resting microglia. Maintains a depolarized membrane potential required for proper ramified microglia morphology and phagocytosis, selectively mediating microglial pruning of presynaptic compartments at hippocampal excitatory synapses. Upon local release of ATP caused by neuronal injury or infection, it is potentiated by P2RY12 and P2RX7 receptor signaling and contributes to ATP-triggered K(+) efflux underlying microglial NLRP3 inflammasome assembly and IL1B release. The protein is Potassium channel subfamily K member 13 of Mus musculus (Mouse).